Consider the following 591-residue polypeptide: Aspartate--tRNA(Asp/Asn) ligase (591 aa).

E174 contacts L-aspartate. The tract at residues 198–201 is aspartate; sequence QLFK. R220 provides a ligand contact to L-aspartate. ATP contacts are provided by residues 220 to 222 and Q229; that span reads RDE. An L-aspartate-binding site is contributed by H450. An ATP-binding site is contributed by E483. R490 lines the L-aspartate pocket. 535–538 provides a ligand contact to ATP; it reads GLDR.

This sequence belongs to the class-II aminoacyl-tRNA synthetase family. Type 1 subfamily. In terms of assembly, homodimer.

It localises to the cytoplasm. The catalysed reaction is tRNA(Asx) + L-aspartate + ATP = L-aspartyl-tRNA(Asx) + AMP + diphosphate. In terms of biological role, aspartyl-tRNA synthetase with relaxed tRNA specificity since it is able to aspartylate not only its cognate tRNA(Asp) but also tRNA(Asn). Reaction proceeds in two steps: L-aspartate is first activated by ATP to form Asp-AMP and then transferred to the acceptor end of tRNA(Asp/Asn). This Pseudomonas fluorescens (strain ATCC BAA-477 / NRRL B-23932 / Pf-5) protein is Aspartate--tRNA(Asp/Asn) ligase.